Here is a 250-residue protein sequence, read N- to C-terminus: Diaminopimelate epimerase (250 aa).

Positions 11 and 60 each coordinate substrate. Catalysis depends on C69, which acts as the Proton donor. Substrate-binding positions include 70–71 (GN), N164, and 182–183 (ER). C192 (proton acceptor) is an active-site residue. Substrate is bound at residue 193–194 (GT).

The protein belongs to the diaminopimelate epimerase family. Homodimer.

Its subcellular location is the cytoplasm. It catalyses the reaction (2S,6S)-2,6-diaminopimelate = meso-2,6-diaminopimelate. It functions in the pathway amino-acid biosynthesis; L-lysine biosynthesis via DAP pathway; DL-2,6-diaminopimelate from LL-2,6-diaminopimelate: step 1/1. In terms of biological role, catalyzes the stereoinversion of LL-2,6-diaminopimelate (L,L-DAP) to meso-diaminopimelate (meso-DAP), a precursor of L-lysine and an essential component of the bacterial peptidoglycan. This chain is Diaminopimelate epimerase, found in Nitratiruptor sp. (strain SB155-2).